The primary structure comprises 165 residues: Transmembrane protein 128 (165 aa).

4 consecutive transmembrane segments (helical) span residues 49–69 (NIHS…VDFF), 81–101 (WFLF…YCIV), 119–139 (LIPI…VALW), and 144–164 (FFTP…TSLL).

It is found in the membrane. In Bos taurus (Bovine), this protein is Transmembrane protein 128 (TMEM128).